Consider the following 145-residue polypeptide: Brain and acute leukemia cytoplasmic protein (145 aa).

Gly-2 is lipidated: N-myristoyl glycine. Residue Cys-3 is the site of S-palmitoyl cysteine attachment. An interaction with CAMK2A region spans residues 3–35 (CGGSRADAIEPRYYESWTRETESTWLTYTDSDA). The tract at residues 27–119 (WLTYTDSDAP…AKRDAKRMPA (93 aa)) is disordered. Over residues 32 to 46 (DSDAPPSAAAPDSGP) the composition is skewed to low complexity. A compositionally biased stretch (polar residues) spans 83 to 108 (CETQCPNPQSLSSGPLTQKQNGLQTT). Positions 109–119 (EAKRDAKRMPA) are enriched in basic and acidic residues.

As to quaternary structure, interacts with CAMK2A. Post-translationally, palmitoylation and myristoylation target the protein to the lipid rafts. In terms of tissue distribution, predominantly expressed in neuroectoderm-derived tissues. Expressed in the brain and spinal cord, and at low levels, in the adrenal gland. In the bone marrow, confined to the CD34+ progenitor cells. Not found in peripheral blood mononuclear cells, nor lymph nodes. Tends to be expressed at high levels in acute myeloid leukemia and glioblastoma cells.

The protein resides in the cytoplasm. It is found in the synapse. The protein localises to the synaptosome. It localises to the membrane raft. Its subcellular location is the postsynaptic density. In terms of biological role, may play a synaptic role at the postsynaptic lipid rafts possibly through interaction with CAMK2A. This chain is Brain and acute leukemia cytoplasmic protein, found in Homo sapiens (Human).